We begin with the raw amino-acid sequence, 205 residues long: Large ribosomal subunit protein bL25 (205 aa).

A disordered region spans residues 180 to 205; it reads HEEVAEEAEETEGEDAEEAPAAEGEE. Residues 183-205 show a composition bias toward acidic residues; it reads VAEEAEETEGEDAEEAPAAEGEE.

It belongs to the bacterial ribosomal protein bL25 family. CTC subfamily. As to quaternary structure, part of the 50S ribosomal subunit; part of the 5S rRNA/L5/L18/L25 subcomplex. Contacts the 5S rRNA. Binds to the 5S rRNA independently of L5 and L18.

Its function is as follows. This is one of the proteins that binds to the 5S RNA in the ribosome where it forms part of the central protuberance. This chain is Large ribosomal subunit protein bL25, found in Corynebacterium diphtheriae (strain ATCC 700971 / NCTC 13129 / Biotype gravis).